The chain runs to 306 residues: 4-hydroxybenzoate geranyltransferase 2 (306 aa).

The next 8 membrane-spanning stretches (helical) occupy residues 38 to 58 (IGSW…ADLG), 61 to 81 (PKML…GCTI), 119 to 139 (LFIG…LAIV), 153 to 173 (ITYW…LLGS), 178 to 198 (GSVV…WTLV), 229 to 249 (IWIT…GFIV), 251 to 271 (IGLP…WQIF), and 285 to 305 (FVSN…GRLF).

This sequence belongs to the UbiA prenyltransferase family. Mg(2+) serves as cofactor. In terms of tissue distribution, expressed only in roots.

The protein resides in the endoplasmic reticulum membrane. It carries out the reaction 4-hydroxybenzoate + (2E)-geranyl diphosphate = 3-geranyl-4-hydroxybenzoate + diphosphate. Prenyltransferase involved in the biosynthesis of shikonin, a naphthoquinone secondary metabolite. Could accept only geranyl diphosphate and not dimethylallyl diphosphate, farnesyl diphosphate, or geranylgeranyl diphosphate as substrate. The chain is 4-hydroxybenzoate geranyltransferase 2 (PGT-2) from Lithospermum erythrorhizon (Purple gromwell).